A 744-amino-acid polypeptide reads, in one-letter code: NAD(P)H-quinone oxidoreductase subunit 5, chloroplastic (744 aa).

16 helical membrane-spanning segments follow: residues W9–F29, W40–I60, I89–I109, F125–I145, I147–T167, G185–F205, N219–A239, T258–A278, I290–Q312, L327–I347, A354–C374, T396–S416, W425–Y445, L549–F569, V608–V628, and Y724–F744.

This sequence belongs to the complex I subunit 5 family. As to quaternary structure, NDH is composed of at least 16 different subunits, 5 of which are encoded in the nucleus.

The protein resides in the plastid. It localises to the chloroplast thylakoid membrane. The catalysed reaction is a plastoquinone + NADH + (n+1) H(+)(in) = a plastoquinol + NAD(+) + n H(+)(out). It carries out the reaction a plastoquinone + NADPH + (n+1) H(+)(in) = a plastoquinol + NADP(+) + n H(+)(out). NDH shuttles electrons from NAD(P)H:plastoquinone, via FMN and iron-sulfur (Fe-S) centers, to quinones in the photosynthetic chain and possibly in a chloroplast respiratory chain. The immediate electron acceptor for the enzyme in this species is believed to be plastoquinone. Couples the redox reaction to proton translocation, and thus conserves the redox energy in a proton gradient. This Mutisia acuminata protein is NAD(P)H-quinone oxidoreductase subunit 5, chloroplastic (ndhF).